The chain runs to 206 residues: Potassium channel B446_29190 (206 aa).

Met1 is a topological domain (cytoplasmic). Residues 2-25 (NESGRVEAFSDGVFAIAITLLILD) form a helical membrane-spanning segment. A RxxxFSD motif motif is present at residues 6-12 (RVEAFSD). Topologically, residues 26–44 (IKVPKADGPGGLWHALGAQ) are extracellular. The interval 31 to 34 (ADGP) is short helix H1. The tract at residues 36 to 42 (GLWHALG) is short helix H2. The chain crosses the membrane as a helical span at residues 45–70 (WPSYAAYVVSFLVIGIMWVNHHQVFS). Over 71–76 (YVARVD) the chain is Cytoplasmic. Residues 77-102 (RALMFLNLLVLMVVAAVPWPTAMLAE) traverse the membrane as a helical segment. Topologically, residues 103–110 (YLREDRAS) are extracellular. A helical transmembrane segment spans residues 111–135 (HVAAAVYSLVMVAMALAFQALWWHL). Topologically, residues 136 to 147 (TRTGHLFDPRVD) are cytoplasmic. A helical membrane pass occupies residues 148–174 (APAARATRIRFALGSLGYPLTVGLAFV). At 175-176 (SA) the chain is on the extracellular side. Residues 177–192 (PLTLAAHGLLALYYGF) form a helical membrane-spanning segment. The Cytoplasmic portion of the chain corresponds to 193-206 (NQVPVPTREAAAPS).

This sequence belongs to the TMEM175 family. In terms of assembly, homotetramer.

It localises to the membrane. The enzyme catalyses K(+)(in) = K(+)(out). Its function is as follows. Potassium channel. The polypeptide is Potassium channel B446_29190 (Streptomyces collinus (strain DSM 40733 / Tue 365)).